The primary structure comprises 208 residues: Large ribosomal subunit protein bL25 (208 aa).

The span at 185–195 (DLEEETGEAEG) shows a compositional bias: acidic residues. Positions 185–208 (DLEEETGEAEGETAAAPAEEGAES) are disordered. The span at 196–208 (ETAAAPAEEGAES) shows a compositional bias: low complexity.

Belongs to the bacterial ribosomal protein bL25 family. CTC subfamily. As to quaternary structure, part of the 50S ribosomal subunit; part of the 5S rRNA/L5/L18/L25 subcomplex. Contacts the 5S rRNA. Binds to the 5S rRNA independently of L5 and L18.

In terms of biological role, this is one of the proteins that binds to the 5S RNA in the ribosome where it forms part of the central protuberance. This Rhodococcus opacus (strain B4) protein is Large ribosomal subunit protein bL25.